Consider the following 374-residue polypeptide: LRR repeats and ubiquitin-like domain-containing protein At2g30105 (374 aa).

The region spanning 13-87 is the Ubiquitin-like domain; it reads IKLTVKFGGK…LMLMASQGLH (75 aa). LRR repeat units follow at residues 128 to 151, 152 to 175, 177 to 200, 201 to 224, 225 to 248, 250 to 270, 272 to 293, 294 to 316, and 318 to 340; these read WKATGVIALAQANLKEIPEEVWDC, GSGVRVLDISENFIKEVPAKISSF, SMQKLFLQGNGLSDESIQWEGIAS, LKRLMLLSISHNNLTVLPSAMGSL, TSLRQLDVTNNKLTSLPNELGLLT, LEILKANNNRITSLPESIGNC, FLMEVDLSANIISELPETFTKL, RNLKTLELNNTGLKTLPSALFKM, and LQLSTLGLHNTEITVEFLRQFEG.

The polypeptide is LRR repeats and ubiquitin-like domain-containing protein At2g30105 (Arabidopsis thaliana (Mouse-ear cress)).